We begin with the raw amino-acid sequence, 452 residues long: UPF0210 protein Hore_14430 (452 aa).

It belongs to the UPF0210 family. Homodimer.

The protein is UPF0210 protein Hore_14430 of Halothermothrix orenii (strain H 168 / OCM 544 / DSM 9562).